Here is a 118-residue protein sequence, read N- to C-terminus: Turripeptide NCR-01 (118 aa).

Residues methionine 1 to alanine 16 form the signal peptide. The tract at residues glutamine 63–tyrosine 118 is disordered. Polar residues predominate over residues glutamine 85–aspartate 102.

In terms of tissue distribution, expressed by the venom duct.

It localises to the secreted. The sequence is that of Turripeptide NCR-01 from Gemmula speciosa (Splendid gem-turris).